A 206-amino-acid chain; its full sequence is Holliday junction branch migration complex subunit RuvA (206 aa).

The domain I stretch occupies residues 1–64; it reads MIGKLKGVLD…EDMIRLYGFR (64 aa). Positions 65–144 are domain II; that stretch reads TVLEREWFRL…AFAGEAAGAI (80 aa). Residues 145–154 are flexible linker; it reads GLKQDLGEGV. Positions 154-206 are domain III; sequence VAPAPVSDAVSALANLGYSRDIAANAVAAALKSAGEGADTGTLIRLGLKELAR.

It belongs to the RuvA family. As to quaternary structure, homotetramer. Forms an RuvA(8)-RuvB(12)-Holliday junction (HJ) complex. HJ DNA is sandwiched between 2 RuvA tetramers; dsDNA enters through RuvA and exits via RuvB. An RuvB hexamer assembles on each DNA strand where it exits the tetramer. Each RuvB hexamer is contacted by two RuvA subunits (via domain III) on 2 adjacent RuvB subunits; this complex drives branch migration. In the full resolvosome a probable DNA-RuvA(4)-RuvB(12)-RuvC(2) complex forms which resolves the HJ.

Its subcellular location is the cytoplasm. The RuvA-RuvB-RuvC complex processes Holliday junction (HJ) DNA during genetic recombination and DNA repair, while the RuvA-RuvB complex plays an important role in the rescue of blocked DNA replication forks via replication fork reversal (RFR). RuvA specifically binds to HJ cruciform DNA, conferring on it an open structure. The RuvB hexamer acts as an ATP-dependent pump, pulling dsDNA into and through the RuvAB complex. HJ branch migration allows RuvC to scan DNA until it finds its consensus sequence, where it cleaves and resolves the cruciform DNA. The protein is Holliday junction branch migration complex subunit RuvA of Chelativorans sp. (strain BNC1).